The sequence spans 292 residues: Glycine--tRNA ligase alpha subunit (292 aa).

It belongs to the class-II aminoacyl-tRNA synthetase family. As to quaternary structure, tetramer of two alpha and two beta subunits.

Its subcellular location is the cytoplasm. The catalysed reaction is tRNA(Gly) + glycine + ATP = glycyl-tRNA(Gly) + AMP + diphosphate. This chain is Glycine--tRNA ligase alpha subunit, found in Geobacter sulfurreducens (strain ATCC 51573 / DSM 12127 / PCA).